A 296-amino-acid polypeptide reads, in one-letter code: Defective in cullin neddylation protein 1 (296 aa).

The UBA-like domain occupies 4–41 (KTQLRQQFCELTGTSNTTATKYLESVRYDLARAIDNYY). The DCUN1 domain occupies 58–291 (KIDDRLIQIF…VVDEFLEYLH (234 aa)).

May contribute to neddylation of cullin components of SCF-type E3 ubiquitin ligase complexes. Neddylation of cullins play an essential role in the regulation of SCF-type complexes activity. This Candida albicans (strain SC5314 / ATCC MYA-2876) (Yeast) protein is Defective in cullin neddylation protein 1 (DCN1).